Consider the following 225-residue polypeptide: Holliday junction branch migration complex subunit RuvA (225 aa).

The domain I stretch occupies residues methionine 1–threonine 71. The segment at serine 72–serine 150 is domain II. The tract at residues lysine 151 to isoleucine 161 is flexible linker. The domain III stretch occupies residues isoleucine 161 to arginine 225.

This sequence belongs to the RuvA family. As to quaternary structure, homotetramer. Forms an RuvA(8)-RuvB(12)-Holliday junction (HJ) complex. HJ DNA is sandwiched between 2 RuvA tetramers; dsDNA enters through RuvA and exits via RuvB. An RuvB hexamer assembles on each DNA strand where it exits the tetramer. Each RuvB hexamer is contacted by two RuvA subunits (via domain III) on 2 adjacent RuvB subunits; this complex drives branch migration. In the full resolvosome a probable DNA-RuvA(4)-RuvB(12)-RuvC(2) complex forms which resolves the HJ.

It is found in the cytoplasm. In terms of biological role, the RuvA-RuvB-RuvC complex processes Holliday junction (HJ) DNA during genetic recombination and DNA repair, while the RuvA-RuvB complex plays an important role in the rescue of blocked DNA replication forks via replication fork reversal (RFR). RuvA specifically binds to HJ cruciform DNA, conferring on it an open structure. The RuvB hexamer acts as an ATP-dependent pump, pulling dsDNA into and through the RuvAB complex. HJ branch migration allows RuvC to scan DNA until it finds its consensus sequence, where it cleaves and resolves the cruciform DNA. This Prochlorococcus marinus (strain AS9601) protein is Holliday junction branch migration complex subunit RuvA.